The sequence spans 1045 residues: Fibrosin-1-like protein (1045 aa).

Over residues 1-12 the composition is skewed to basic residues; sequence MEAKVRPSRRSR. Disordered regions lie at residues 1–86 and 99–315; these read MEAK…DGFA and DMAL…THVP. Over residues 13–28 the composition is skewed to basic and acidic residues; that stretch reads AQRDRGRRREAARDAR. The span at 48-63 shows a compositional bias: low complexity; the sequence is GLRGAPPRGAAPAPRT. A compositionally biased stretch (basic and acidic residues) spans 99–123; the sequence is DMALKPHERKEKWERRLIKKPRESE. Polar residues predominate over residues 183-197; it reads EATSSRDPLSDSSAH. Pro residues predominate over residues 270–280; it reads HAAPCPGPPPG. The residue at position 340 (Ser-340) is a Phosphoserine. The span at 443 to 457 shows a compositional bias: basic residues; that stretch reads QHTHQHTHQHTHQHQ. Disordered stretches follow at residues 443–462 and 719–753; these read QHTH…TFAP and EGSS…PKSV. Pro residues predominate over residues 741–750; it reads PSFPAPPPWP. Ser-790 is modified (phosphoserine). Disordered stretches follow at residues 809 to 880 and 910 to 961; these read ELGR…APLQ and AAAP…PALD. Positions 817-837 are enriched in basic and acidic residues; that stretch reads AEREAEPRVKESRSPAKEEAA. Lys-858 is covalently cross-linked (Glycyl lysine isopeptide (Lys-Gly) (interchain with G-Cter in SUMO2)). Residues 910 to 922 show a composition bias toward low complexity; the sequence is AAAPAPGSAALLE. Over residues 923 to 949 the composition is skewed to basic and acidic residues; that stretch reads PPERPYRDREPHGYSPERLRGELERAR. Residues Ser-937 and Ser-977 each carry the phosphoserine modification. 2 positions are modified to phosphothreonine: Thr-989 and Thr-1010. The interval 991–1045 is disordered; the sequence is PAAAALGAPPPLVTAAGPPTPPGPPRSRTTPLGGLGPGEARDYSPSRNPPEVEAR. Residues 998–1015 show a composition bias toward pro residues; sequence APPPLVTAAGPPTPPGPP. Over residues 1029–1045 the composition is skewed to basic and acidic residues; sequence EARDYSPSRNPPEVEAR.

It belongs to the AUTS2 family.

The chain is Fibrosin-1-like protein (FBRSL1) from Homo sapiens (Human).